Reading from the N-terminus, the 366-residue chain is Spermine synthase (366 aa).

Residue Ala-2 is modified to N-acetylalanine. Phosphoserine is present on Ser-57. A PABS domain is found at 122 to 362 (RYWPTADGRL…ELWVFYTVWK (241 aa)). Position 148 (Gln-148) interacts with S-adenosyl 3-(methylsulfanyl)propylamine. The spermidine site is built by Tyr-177 and Asp-201. S-adenosyl 3-(methylsulfanyl)propylamine-binding positions include Glu-220 and 255–256 (DC). Catalysis depends on Asp-276, which acts as the Proton acceptor. The spermidine site is built by Tyr-351 and Glu-353.

It belongs to the spermidine/spermine synthase family. Homodimer. Dimerization is mediated through the N-terminal domain and seems to be required for activity as deletion of the N-terminal domain causes complete loss of activity.

The catalysed reaction is S-adenosyl 3-(methylsulfanyl)propylamine + spermidine = spermine + S-methyl-5'-thioadenosine + H(+). The protein operates within amine and polyamine biosynthesis; spermine biosynthesis; spermine from spermidine: step 1/1. Its function is as follows. Catalyzes the production of spermine from spermidine and decarboxylated S-adenosylmethionine (dcSAM). The chain is Spermine synthase from Homo sapiens (Human).